The sequence spans 247 residues: 2,3-bisphosphoglycerate-dependent phosphoglycerate mutase (247 aa).

Substrate contacts are provided by residues 8-15 (RHGESQWN), 21-22 (TG), arginine 60, 87-90 (ERHY), lysine 98, 114-115 (RR), and 183-184 (GN). Histidine 9 (tele-phosphohistidine intermediate) is an active-site residue. The active-site Proton donor/acceptor is the glutamate 87.

The protein belongs to the phosphoglycerate mutase family. BPG-dependent PGAM subfamily.

The catalysed reaction is (2R)-2-phosphoglycerate = (2R)-3-phosphoglycerate. It participates in carbohydrate degradation; glycolysis; pyruvate from D-glyceraldehyde 3-phosphate: step 3/5. In terms of biological role, catalyzes the interconversion of 2-phosphoglycerate and 3-phosphoglycerate. This chain is 2,3-bisphosphoglycerate-dependent phosphoglycerate mutase, found in Chlorobium phaeobacteroides (strain DSM 266 / SMG 266 / 2430).